The following is a 241-amino-acid chain: Fatty acid metabolism regulator protein (241 aa).

The 69-residue stretch at 11–79 (QSPAALAEEY…HGKPTKVNNI (69 aa)) folds into the HTH gntR-type domain. The segment at residues 39-58 (ERDLADKIGVTRTTLREVLQ) is a DNA-binding region (H-T-H motif).

In terms of assembly, homodimer.

Its subcellular location is the cytoplasm. Its function is as follows. Multifunctional regulator of fatty acid metabolism. The chain is Fatty acid metabolism regulator protein from Haemophilus influenzae (strain 86-028NP).